We begin with the raw amino-acid sequence, 256 residues long: Probable transcriptional regulatory protein A1I_03240 (256 aa).

Residues 1–21 are disordered; that stretch reads MAGHSKFKNIQHRKGAQDKKR.

The protein belongs to the TACO1 family.

The protein resides in the cytoplasm. The sequence is that of Probable transcriptional regulatory protein A1I_03240 from Rickettsia bellii (strain OSU 85-389).